A 1155-amino-acid polypeptide reads, in one-letter code: RHO1 GDP-GTP exchange protein 1 (1155 aa).

Met1 carries the N-acetylmethionine modification. Over residues 100–143 (NSSPQSFTGDQISPTNKKISINDSTRQDKGNSCTTTSSPSQKRS) the composition is skewed to polar residues. The interval 100–249 (NSSPQSFTGD…HSRSKSSPVS (150 aa)) is disordered. Residues Ser154 and Ser155 each carry the phosphoserine modification. Residues 155–167 (SPSLLSFSKNSGS) are compositionally biased toward low complexity. Thr180 is modified (phosphothreonine). Low complexity predominate over residues 190 to 227 (LHSSFNGKHSSSSTSSLFALESLKTQNRRSSNSSNHSS). The segment covering 228 to 243 (QYRRHTNQHQRHHSRS) has biased composition (basic residues). Ser433 carries the phosphoserine modification. Residues 464–651 (KRQEAIYELF…KDLMKRIDRA (188 aa)) form the DH domain. In terms of domain architecture, CNH spans 842-1137 (TNRVNDVLIC…RMLKSYAKKI (296 aa)).

In terms of biological role, stimulates the exchange of RHO1 GDP-bound form into GTP-bound form. In Saccharomyces cerevisiae (strain ATCC 204508 / S288c) (Baker's yeast), this protein is RHO1 GDP-GTP exchange protein 1 (ROM1).